A 1826-amino-acid polypeptide reads, in one-letter code: ATPase family AAA domain-containing protein 5 (1826 aa).

Serine 44 carries the phosphoserine modification. A Glycyl lysine isopeptide (Lys-Gly) (interchain with G-Cter in SUMO2) cross-link involves residue lysine 127. 7 disordered regions span residues 170–254, 282–311, 323–367, 398–572, 588–623, 647–684, and 709–729; these read SIED…KRAD, PAVPACVPSGPGEAVKSGSEGELSGSCEPS, AQVH…RKSN, QQFM…EPGS, RSCSTPATNALGGTESEDAQDTIPVKASTPKSARTS, KFTRISTPKKSKKSSKKSETTEEELTSQKKKANSTSKN, and VVPLRRSSRHQARSAKEKSPE. At serine 215 the chain carries Phosphoserine. The span at 243-254 shows a compositional bias: basic and acidic residues; sequence NDSRTHATKRAD. Residues 298-311 show a composition bias toward low complexity; it reads SGSEGELSGSCEPS. 2 positions are modified to phosphoserine: serine 351 and serine 366. The segment at 365–381 is interaction with WDR48; the sequence is KSNVVIQEGQLELAVLE. Basic and acidic residues predominate over residues 418–442; sequence KPLEKQKDPSEKSVHEGDSSSEKII. A compositionally biased stretch (polar residues) spans 445 to 456; sequence PNIQRVSSQGCL. The span at 459 to 468 shows a compositional bias: basic and acidic residues; sequence HADRGSFPKE. Over residues 469–481 the composition is skewed to basic residues; the sequence is KSKKPNKKGKKTR. A compositionally biased stretch (basic and acidic residues) spans 487 to 505; it reads NREENIQKEKTAFSLKDEQ. The segment covering 540-559 has biased composition (polar residues); sequence DSVQMSLCNRNKSRSSSTPT. Residues serine 591 and serine 603 each carry the phosphoserine modification. Phosphoserine is present on residues serine 727 and serine 801. The interval 965 to 1034 is disordered; sequence GKQASPQLQP…NLDPSRDSGT (70 aa). Residues 1006 to 1019 are compositionally biased toward basic and acidic residues; sequence EEMKGRSKDLDERI. Serine 1104 carries the post-translational modification Phosphoserine. ATP is bound at residue 1119–1126; it reads GPTGVGKT. The disordered stretch occupies residues 1183-1216; it reads YNIGKSPKKLNSPGKVVTSPRKLPPSSPKTSGQK. An LXCXE motif motif is present at residues 1415–1419; it reads LVCSE. 2 disordered regions span residues 1527-1552 and 1592-1611; these read PASMGHLTRKQSKDQPLRKSQKRKQK and SNPEIKTQNSGFKPHSVPQP. Residues 1612 to 1701 are interaction with RAD51 and RFC5; the sequence is PKTLAEKKCC…ATAEALSFTE (90 aa).

Belongs to the AAA ATPase family. Component of a heteropentameric replication factor ATAD5 RFC-like complex composed of one large subunit (ATAD5) and four small subunits (RFC2, RFC3, RFC4 and RFC5). Within the ATAD5 RFC-like complex, interacts with RFC2, RFC4 and RFC5. Within the ATAD5 RFC-like complex, interacts directly via-N terminal with RAD51; the interactions is enhanced under replication stress. Interacts with RB1 predominantly in G1 phase via its LXCXE motif. Interacts with RAD9A in growing cells. The interaction with RAD9A is reduced after exposure to DNA replication-inhibiting agents. Interacts with BRD4. Interacts with PCNA. Interacts with deubiquitinating enzyme USP1, and its associated factor, WDR48. ATR may stimulate the RAD9A dissociation. In terms of tissue distribution, expressed ubiquitously in all cell lines like teratocarcinoma, cell lymphoma, lymphoma.

It is found in the nucleus. Functionally, has an important role in DNA replication and in maintaining genome integrity during replication stress. Involved in a RAD9A-related damage checkpoint, a pathway that is important in determining whether DNA damage is compatible with cell survival or whether it requires cell elimination by apoptosis. Modulates the RAD9A interaction with BCL2 and thereby induces DNA damage-induced apoptosis. Promotes PCNA deubiquitination by recruiting the ubiquitin-specific protease 1 (USP1) and WDR48 thereby down-regulating the error-prone damage bypass pathway. As component of the ATAD5 RFC-like complex, regulates the function of the DNA polymerase processivity factor PCNA by unloading the ring-shaped PCNA homotrimer from DNA after replication during the S phase of the cell cycle. This seems to be dependent on its ATPase activity. Plays important roles in restarting stalled replication forks under replication stress, by unloading the PCNA homotrimer from DNA and recruiting RAD51 possibly through an ATR-dependent manner. Ultimately this enables replication fork regression, breakage, and eventual fork restart. Both the PCNA unloading activity and the interaction with WDR48 are required to efficiently recruit RAD51 to stalled replication forks. Promotes the generation of MUS81-mediated single-stranded DNA-associated breaks in response to replication stress, which is an alternative pathway to restart stalled/regressed replication forks. This is ATPase family AAA domain-containing protein 5 (Atad5) from Mus musculus (Mouse).